A 383-amino-acid chain; its full sequence is Embryonic pepsinogen (383 aa).

Residues 1-16 (MRSLALLCAVLALSDG) form the signal peptide. The Peptidase A1 domain maps to 76-380 (YYGTISIGTP…DRANNRVGLA (305 aa)). Residue aspartate 94 is part of the active site. Cysteines 107 and 112 form a disulfide. N-linked (GlcNAc...) asparagine glycans are attached at residues asparagine 132 and asparagine 204. Cysteine 267 and cysteine 271 are disulfide-bonded. Aspartate 276 is a catalytic residue. An N-linked (GlcNAc...) asparagine glycan is attached at asparagine 309. Cysteine 310 and cysteine 344 are disulfide-bonded. N-linked (GlcNAc...) asparagine glycosylation is present at asparagine 350.

It belongs to the peptidase A1 family.

The chain is Embryonic pepsinogen from Gallus gallus (Chicken).